The chain runs to 677 residues: WD repeat-containing protein 43 (677 aa).

6 WD repeats span residues 11–51, 57–119, 124–163, 166–205, 207–259, and 267–309; these read PLAP…LHQE, HLSG…LHSK, GHDN…VKCK, GDNS…RHFT, HATP…KEKS, and TDEP…YCKK. The residue at position 77 (S77) is a Phosphoserine. K309 is covalently cross-linked (Glycyl lysine isopeptide (Lys-Gly) (interchain with G-Cter in SUMO1); alternate). K309 participates in a covalent cross-link: Glycyl lysine isopeptide (Lys-Gly) (interchain with G-Cter in SUMO2); alternate. T321 bears the Phosphothreonine mark. K384 is covalently cross-linked (Glycyl lysine isopeptide (Lys-Gly) (interchain with G-Cter in SUMO1); alternate). K384 participates in a covalent cross-link: Glycyl lysine isopeptide (Lys-Gly) (interchain with G-Cter in SUMO2); alternate. Phosphothreonine is present on T394. Phosphoserine is present on residues S399, S431, S437, and S590. 2 disordered regions span residues 414 to 445 and 582 to 677; these read AIKP…LGAM and SEKT…SEEE. Residues 582 to 592 show a composition bias toward polar residues; sequence SEKTKGATSPG. Residues 600 to 652 are compositionally biased toward acidic residues; that stretch reads EEESSEEESDDEIADKDSEDNWDEDEEESESEKDEDVEEEDEDAEGKDEENGE. Over residues 653–663 the composition is skewed to basic and acidic residues; the sequence is DRDTASEKELN. T656 bears the Phosphothreonine mark. Phosphoserine is present on S658. The segment covering 664–677 has biased composition (acidic residues); that stretch reads GDSDLDPENESEEE.

The protein belongs to the UTP5 family. As to quaternary structure, part of the small subunit (SSU) processome, composed of more than 70 proteins and the RNA chaperone small nucleolar RNA (snoRNA) U3. May be a component of the proposed t-UTP subcomplex of the ribosomal small subunit (SSU) processome containing at least UTP4, WDR43, HEATR1, UTP15, WDR75. Binds to RNA; binding is required for its chromatin association. Interacts with CDK9, DDX21 and SUPT6H. Interacts with RNA polymerase II. Interacts directly with UTP4 and UTP15.

The protein localises to the nucleus. The protein resides in the nucleolus. It is found in the nucleolus fibrillar center. It localises to the nucleoplasm. In terms of biological role, ribosome biogenesis factor that coordinates hyperactive transcription and ribogenesis. Part of the small subunit (SSU) processome, first precursor of the small eukaryotic ribosomal subunit. During the assembly of the SSU processome in the nucleolus, many ribosome biogenesis factors, an RNA chaperone and ribosomal proteins associate with the nascent pre-rRNA and work in concert to generate RNA folding, modifications, rearrangements and cleavage as well as targeted degradation of pre-ribosomal RNA by the RNA exosome. Involved in nucleolar processing of pre-18S ribosomal RNA. Required for optimal pre-ribosomal RNA transcription by RNA polymerase I. Essential for stem cell pluripotency and embryonic development. In the nucleoplasm, recruited by promoter-associated/nascent transcripts and transcription to active promoters where it facilitates releases of elongation factor P-TEFb and paused RNA polymerase II to allow transcription elongation and maintain high-level expression of its targets genes. In Homo sapiens (Human), this protein is WD repeat-containing protein 43.